The sequence spans 416 residues: Keratin, type I cuticular Ha1 (416 aa).

The head stretch occupies residues 1–56 (MPYNFCLPSLSCRTSCSSRPCVPPSCHSCTLPGACNIPANVSNCNWFCEGSFNGSE). Residues 56–367 (EKETMQFLND…SLLESEDCNL (312 aa)) form the IF rod domain. Residues 57–91 (KETMQFLNDRLASYLEKVRQLERDNAELENLIRER) are coil 1A. Positions 92–102 (SQQQEPLLCPS) are linker 1. Positions 103 to 203 (YQSYFKTIEE…HEQEVNTLRC (101 aa)) are coil 1B. Residues 204–219 (QLGDRLNVEVDAAPTV) are linker 12. Residues 220–363 (DLNRVLNETR…NTYRSLLESE (144 aa)) are coil 2. The interval 364 to 416 (DCNLPSNPCATTNACSKPIGPCLSNPCTSCVPPAPCTPCAPRPRCGPCNSFVR) is tail.

It belongs to the intermediate filament family. As to expression, present in scalp but not in hairless skin. Abundantly expressed in the differentiating cortex of growing (anagen) hair. Expression is restricted to the keratinocytes of the hair cortex and is absent from inner root sheath and medulla.

The protein is Keratin, type I cuticular Ha1 (KRT31) of Homo sapiens (Human).